The sequence spans 316 residues: Retinol dehydrogenase 12 (316 aa).

46-52 (GANTGIG) lines the NADP(+) pocket. Residue Ser-175 coordinates substrate. Tyr-200 functions as the Proton acceptor in the catalytic mechanism.

The protein belongs to the short-chain dehydrogenases/reductases (SDR) family. Expressed in the retina.

The catalysed reaction is all-trans-retinol + NADP(+) = all-trans-retinal + NADPH + H(+). It catalyses the reaction 11-cis-retinol + NADP(+) = 11-cis-retinal + NADPH + H(+). The enzyme catalyses 9-cis-retinol + NADP(+) = 9-cis-retinal + NADPH + H(+). It carries out the reaction a 4-hydroxynonen-1-ol + NADP(+) = a 4-hydroxynonenal + NADPH + H(+). The catalysed reaction is (E)-non-2-en-1-ol + NADP(+) = (E)-non-2-enal + NADPH + H(+). It catalyses the reaction (Z)-non-6-en-1-ol + NADP(+) = (Z)-non-6-enal + NADPH + H(+). The enzyme catalyses nonan-1-ol + NADP(+) = nonanal + NADPH + H(+). The protein operates within cofactor metabolism; retinol metabolism. In terms of biological role, retinoids dehydrogenase/reductase with a clear preference for NADP. Displays high activity towards 9-cis, 11-cis and all-trans-retinal. Shows very weak activity towards 13-cis-retinol. Also exhibits activity, albeit with lower affinity than for retinaldehydes, towards lipid peroxidation products (C9 aldehydes) such as 4-hydroxynonenal and trans-2-nonenal. May play an important function in photoreceptor cells to detoxify 4-hydroxynonenal and potentially other toxic aldehyde products resulting from lipid peroxidation. Has no dehydrogenase activity towards steroids. The sequence is that of Retinol dehydrogenase 12 (RDH12) from Bos taurus (Bovine).